The chain runs to 199 residues: NAD(P)H dehydrogenase (quinone) (199 aa).

The region spanning V4–V190 is the Flavodoxin-like domain. FMN-binding positions include S10–V15 and T78–Y80. Position 12 (W12) interacts with NAD(+). W98 contacts substrate. FMN-binding positions include S113 to G119 and H134.

The protein belongs to the WrbA family. FMN serves as cofactor.

The catalysed reaction is a quinone + NADH + H(+) = a quinol + NAD(+). The enzyme catalyses a quinone + NADPH + H(+) = a quinol + NADP(+). In Methylorubrum extorquens (strain CM4 / NCIMB 13688) (Methylobacterium extorquens), this protein is NAD(P)H dehydrogenase (quinone).